A 100-amino-acid polypeptide reads, in one-letter code: Large ribosomal subunit protein bL21 (100 aa).

This sequence belongs to the bacterial ribosomal protein bL21 family. In terms of assembly, part of the 50S ribosomal subunit. Contacts protein L20.

Functionally, this protein binds to 23S rRNA in the presence of protein L20. This Mycoplasmoides gallisepticum (strain R(low / passage 15 / clone 2)) (Mycoplasma gallisepticum) protein is Large ribosomal subunit protein bL21.